A 174-amino-acid polypeptide reads, in one-letter code: Ribosome maturation factor RimM (174 aa).

Residues 95–174 (DDEFYWRDLI…QIQVEWPSDF (80 aa)) enclose the PRC barrel domain.

The protein belongs to the RimM family. In terms of assembly, binds ribosomal protein uS19.

Its subcellular location is the cytoplasm. In terms of biological role, an accessory protein needed during the final step in the assembly of 30S ribosomal subunit, possibly for assembly of the head region. Essential for efficient processing of 16S rRNA. May be needed both before and after RbfA during the maturation of 16S rRNA. It has affinity for free ribosomal 30S subunits but not for 70S ribosomes. The polypeptide is Ribosome maturation factor RimM (Idiomarina loihiensis (strain ATCC BAA-735 / DSM 15497 / L2-TR)).